A 193-amino-acid polypeptide reads, in one-letter code: CRIB domain-containing protein RIC5 (193 aa).

The region spanning 29 to 42 (IGIPTDVKHVAHIG) is the CRIB domain. The interval 42–193 (GWEGPSATTP…CAGLGSSTGR (152 aa)) is disordered. Over residues 55 to 67 (HDFKPTDQTKTET) the composition is skewed to basic and acidic residues. A compositionally biased stretch (polar residues) spans 90–100 (STGNNSPTESP). Over residues 123–134 (GSGSESGSGLEL) the composition is skewed to low complexity.

As to quaternary structure, interacts with ARAC11/ROP1. As to expression, expressed in flowers and pollen.

The protein localises to the cell membrane. In terms of biological role, functions as a downstream effector of Rho-related GTP binding proteins of the 'Rho of Plants' (ROPs) family. Participates in the propagation of ROP GTPase signals in specific cellular responses. Is involved in pollen tube growth regulation through its interaction with ARAC11/ROP1. The polypeptide is CRIB domain-containing protein RIC5 (RIC5) (Arabidopsis thaliana (Mouse-ear cress)).